Reading from the N-terminus, the 184-residue chain is Endothelial cell-specific molecule 1 (184 aa).

An N-terminal signal peptide occupies residues 1 to 21 (MKSLLLLTTLLVPLHLGMAWS). Residues 24–102 (YAVDCPEHCD…GDEFGICKDC (79 aa)) enclose the IGFBP N-terminal domain. Cystine bridges form between cysteine 28–cysteine 51, cysteine 32–cysteine 53, cysteine 37–cysteine 54, cysteine 43–cysteine 57, cysteine 65–cysteine 83, and cysteine 77–cysteine 99. The interval 145-184 (RTSASHTERDSASGDGNAVREEIGEGNAARPSVMKWLNPR) is disordered. Over residues 150–167 (HTERDSASGDGNAVREEI) the composition is skewed to basic and acidic residues. The O-linked (Xyl...) (chondroitin sulfate) serine glycan is linked to serine 157.

O-glycosylated; contains chondroitin sulfate and dermatan sulfate.

Its subcellular location is the secreted. Functionally, involved in angiogenesis; promotes angiogenic sprouting. May have potent implications in lung endothelial cell-leukocyte interactions. The protein is Endothelial cell-specific molecule 1 (Esm1) of Mus musculus (Mouse).